The sequence spans 352 residues: Quinolinate synthase (352 aa).

His48 and Ser69 together coordinate iminosuccinate. A [4Fe-4S] cluster-binding site is contributed by Cys114. Iminosuccinate is bound by residues 140-142 and Ser157; that span reads YAN. [4Fe-4S] cluster is bound at residue Cys201. Residues 227-229 and Thr244 contribute to the iminosuccinate site; that span reads HPE. Position 298 (Cys298) interacts with [4Fe-4S] cluster.

It belongs to the quinolinate synthase family. Type 1 subfamily. Requires [4Fe-4S] cluster as cofactor.

The protein localises to the cytoplasm. It catalyses the reaction iminosuccinate + dihydroxyacetone phosphate = quinolinate + phosphate + 2 H2O + H(+). The protein operates within cofactor biosynthesis; NAD(+) biosynthesis; quinolinate from iminoaspartate: step 1/1. Catalyzes the condensation of iminoaspartate with dihydroxyacetone phosphate to form quinolinate. The sequence is that of Quinolinate synthase from Pseudomonas aeruginosa (strain UCBPP-PA14).